The primary structure comprises 121 residues: MLTKKEQRLRRSRQTRIRIATQGVARLTVNRTNLHIYASVISGDGTKVLAAASTAEVEVRKEIGASGKGGNVAAAQAIGKRIAEKAKAAGVEKVAFDRAGFAYHGRVKALADAAREAGLQF.

This sequence belongs to the universal ribosomal protein uL18 family. As to quaternary structure, part of the 50S ribosomal subunit; part of the 5S rRNA/L5/L18/L25 subcomplex. Contacts the 5S and 23S rRNAs.

In terms of biological role, this is one of the proteins that bind and probably mediate the attachment of the 5S RNA into the large ribosomal subunit, where it forms part of the central protuberance. In Polaromonas sp. (strain JS666 / ATCC BAA-500), this protein is Large ribosomal subunit protein uL18.